A 416-amino-acid chain; its full sequence is Diaminobutyrate--2-oxoglutarate transaminase (416 aa).

At Lys263 the chain carries N6-(pyridoxal phosphate)lysine.

It belongs to the class-III pyridoxal-phosphate-dependent aminotransferase family. Requires pyridoxal 5'-phosphate as cofactor.

The enzyme catalyses L-2,4-diaminobutanoate + 2-oxoglutarate = L-aspartate 4-semialdehyde + L-glutamate. It participates in amine and polyamine biosynthesis; ectoine biosynthesis; L-ectoine from L-aspartate 4-semialdehyde: step 1/3. Its function is as follows. Catalyzes reversively the conversion of L-aspartate beta-semialdehyde (ASA) to L-2,4-diaminobutyrate (DABA) by transamination with L-glutamate. This chain is Diaminobutyrate--2-oxoglutarate transaminase (ectB), found in Virgibacillus pantothenticus.